The primary structure comprises 332 residues: tRNA-dihydrouridine(20/20a) synthase (332 aa).

FMN contacts are provided by residues 19 to 21 (PML) and Gln71. Cys101 serves as the catalytic Proton donor. FMN-binding positions include Lys140, His173, 213-215 (NGG), and 235-236 (GR).

This sequence belongs to the Dus family. DusA subfamily. It depends on FMN as a cofactor.

It carries out the reaction 5,6-dihydrouridine(20) in tRNA + NADP(+) = uridine(20) in tRNA + NADPH + H(+). The catalysed reaction is 5,6-dihydrouridine(20) in tRNA + NAD(+) = uridine(20) in tRNA + NADH + H(+). The enzyme catalyses 5,6-dihydrouridine(20a) in tRNA + NADP(+) = uridine(20a) in tRNA + NADPH + H(+). It catalyses the reaction 5,6-dihydrouridine(20a) in tRNA + NAD(+) = uridine(20a) in tRNA + NADH + H(+). Its function is as follows. Catalyzes the synthesis of 5,6-dihydrouridine (D), a modified base found in the D-loop of most tRNAs, via the reduction of the C5-C6 double bond in target uridines. Specifically modifies U20 and U20a in tRNAs. The protein is tRNA-dihydrouridine(20/20a) synthase of Salmonella typhi.